A 5058-amino-acid chain; its full sequence is ATP-binding cassette sub-family A member 13 (5058 aa).

Transmembrane regions (helical) follow at residues 23–43, 3568–3588, 3607–3627, 3648–3668, 3679–3699, 3709–3729, and 3752–3772; these read PVLF…LTVL, VGFF…ASMV, GVHP…VLTI, FIVF…SYLL, ALCT…LLVL, TFLC…ITFL, and FGWV…CGWY. Residues 3842-4074 enclose the ABC transporter 1 domain; the sequence is VTLVSVTKEY…YGQGLRLTLT (233 aa). Residue 3875–3882 coordinates ATP; that stretch reads GTNGAGKT. 7 consecutive transmembrane segments (helical) span residues 4226–4246, 4458–4478, 4504–4524, 4536–4556, 4568–4588, 4607–4627, and 4651–4671; these read TLAD…LFMV, VALC…SSVV, FLYD…VIVA, LAAT…WMYL, FISY…ITIM, VLKW…LVEL, and MNFL…LLLL. Residues 4718 to 4956 enclose the ABC transporter 2 domain; it reads LVLYNLSKHY…FGDGYTVKVW (239 aa). Residue 4754-4761 participates in ATP binding; sequence GVNGAGKS.

The protein belongs to the ABC transporter superfamily. As to expression, significantly expressed in the bone marrow, trachea, testis, thyroid and lung as well as in skin fibroblasts.

It localises to the cytoplasmic vesicle membrane. It carries out the reaction cholesterol(in) + ATP + H2O = cholesterol(out) + ADP + phosphate + H(+). Functionally, may mediate the cholesterol and gangliosides transport from the plasma membrane to intracellular vesicles in an ATP hydrolysis dependent manner, thus playing a role in their internalization by endocytic retrograde transport and may also participate in the endocytosis of synaptic vesicle in cortical neurons. The polypeptide is ATP-binding cassette sub-family A member 13 (Homo sapiens (Human)).